The sequence spans 253 residues: 5-oxoprolinase subunit A (253 aa).

It belongs to the LamB/PxpA family. As to quaternary structure, forms a complex composed of PxpA, PxpB and PxpC.

The catalysed reaction is 5-oxo-L-proline + ATP + 2 H2O = L-glutamate + ADP + phosphate + H(+). In terms of biological role, catalyzes the cleavage of 5-oxoproline to form L-glutamate coupled to the hydrolysis of ATP to ADP and inorganic phosphate. The polypeptide is 5-oxoprolinase subunit A (Azorhizobium caulinodans (strain ATCC 43989 / DSM 5975 / JCM 20966 / LMG 6465 / NBRC 14845 / NCIMB 13405 / ORS 571)).